A 252-amino-acid chain; its full sequence is JmjC domain-containing protein A (252 aa).

The region spanning 103-252 (PYLRNFGMLD…VSCWGKEMIM (150 aa)) is the JmjC domain.

The chain is JmjC domain-containing protein A (jcdA) from Dictyostelium discoideum (Social amoeba).